The chain runs to 153 residues: Proline-rich membrane anchor 1 (153 aa).

An N-terminal signal peptide occupies residues 1-35 (MLLRDLVLRRGCCWSSLLLHCALHPLWGFVQVTHG). The Extracellular segment spans residues 36-92 (EPQKSCSKVTDSCRHVCQCRPPPPLPPPPPPPPPPRLLSAPAPNSTSCPTEESWWSG). Residues 56 to 70 (PPPPLPPPPPPPPPP) form the PRAD domain. Over residues 59–71 (PLPPPPPPPPPPR) the composition is skewed to pro residues. The disordered stretch occupies residues 59 to 79 (PLPPPPPPPPPPRLLSAPAPN). N-linked (GlcNAc...) asparagine glycosylation occurs at Asn-79. A helical transmembrane segment spans residues 93 to 113 (LVIIIAVCCASLVFLTVLVII). Residues 114–153 (CYKAIKRKPLRKDENGTSVAEYPMSASQSNKGVDVNNAVV) are Cytoplasmic-facing.

Interacts with ACHE, probably through disulfide bonds.

The protein resides in the cell membrane. It is found in the cell junction. Its subcellular location is the synapse. Required to anchor acetylcholinesterase (ACHE) to the basal lamina of the neuromuscular junction and to the membrane of neuronal synapses in brain. Also able to organize ACHE into tetramers. The sequence is that of Proline-rich membrane anchor 1 (PRIMA1) from Homo sapiens (Human).